Consider the following 397-residue polypeptide: uncharacterized protein (397 aa).

4 residues coordinate [4Fe-4S] cluster: cysteine 47, cysteine 53, cysteine 56, and cysteine 131. Residues glutamine 235, phenylalanine 262, glutamate 282, and aspartate 328 each coordinate S-adenosyl-L-methionine. Cysteine 354 serves as the catalytic Nucleophile.

This sequence belongs to the class I-like SAM-binding methyltransferase superfamily. RNA M5U methyltransferase family.

This is an uncharacterized protein from Zymomonas mobilis subsp. mobilis (strain ATCC 31821 / ZM4 / CP4).